Consider the following 66-residue polypeptide: Photosystem II reaction center protein J (66 aa).

The tract at residues 1-27 is disordered; the sequence is MSGKKSGLPDGRVPDRNPDGTPAVPWK. A helical transmembrane segment spans residues 37 to 57; the sequence is LWLVATAGGMAVMFVVGLFFY.

It belongs to the PsbJ family. PSII is composed of 1 copy each of membrane proteins PsbA, PsbB, PsbC, PsbD, PsbE, PsbF, PsbH, PsbI, PsbJ, PsbK, PsbL, PsbM, PsbT, PsbX, PsbY, PsbZ, Psb30/Ycf12, peripheral proteins PsbO, CyanoQ (PsbQ), PsbU, PsbV and a large number of cofactors. It forms dimeric complexes.

The protein localises to the cellular thylakoid membrane. Its function is as follows. One of the components of the core complex of photosystem II (PSII). PSII is a light-driven water:plastoquinone oxidoreductase that uses light energy to abstract electrons from H(2)O, generating O(2) and a proton gradient subsequently used for ATP formation. It consists of a core antenna complex that captures photons, and an electron transfer chain that converts photonic excitation into a charge separation. This chain is Photosystem II reaction center protein J, found in Synechococcus sp. (strain RCC307).